A 505-amino-acid chain; its full sequence is Exodeoxyribonuclease 7 large subunit (505 aa).

The disordered stretch occupies residues 466–505 (SGDRDAVIDGEGGPAPAPTAPAPKPRPKPAAPPAGQGDLF). Residues 480 to 497 (APAPTAPAPKPRPKPAAP) show a composition bias toward pro residues.

The protein belongs to the XseA family. Heterooligomer composed of large and small subunits.

The protein localises to the cytoplasm. It carries out the reaction Exonucleolytic cleavage in either 5'- to 3'- or 3'- to 5'-direction to yield nucleoside 5'-phosphates.. Functionally, bidirectionally degrades single-stranded DNA into large acid-insoluble oligonucleotides, which are then degraded further into small acid-soluble oligonucleotides. The protein is Exodeoxyribonuclease 7 large subunit of Caulobacter vibrioides (strain NA1000 / CB15N) (Caulobacter crescentus).